Here is a 251-residue protein sequence, read N- to C-terminus: MNIIRVPVLSTNYIWCLYNYKNECIIIDPGEATKVLDILKKFQFRLRAILLTHNHIDHVNGVAPLIQYFPKTIVYGPTETKNNGSHFLVSEGDDFVLLQKKFKVLNLPGHTPGHIGFYSAPWLFCGDTVFSAGCGKICIGFAQYMYESFLKIRYLPRNTLIFSGHEYTLSNVNFAISILPQDQSIINYRNKIIKLYKKKQPTVPTTLNLELKVNPFFRCGNSNIKKSLNLPCDLKEEWQVFSELRKKKDSF.

Zn(2+) is bound by residues histidine 53, histidine 55, aspartate 57, histidine 58, histidine 110, aspartate 127, and histidine 165.

The protein belongs to the metallo-beta-lactamase superfamily. Glyoxalase II family. As to quaternary structure, monomer. The cofactor is Zn(2+).

It carries out the reaction an S-(2-hydroxyacyl)glutathione + H2O = a 2-hydroxy carboxylate + glutathione + H(+). Its pathway is secondary metabolite metabolism; methylglyoxal degradation; (R)-lactate from methylglyoxal: step 2/2. Functionally, thiolesterase that catalyzes the hydrolysis of S-D-lactoyl-glutathione to form glutathione and D-lactic acid. The chain is Hydroxyacylglutathione hydrolase from Blochmanniella pennsylvanica (strain BPEN).